Reading from the N-terminus, the 143-residue chain is Nucleoside diphosphate kinase (143 aa).

Residues Lys11, Phe59, Arg87, Thr93, Arg104, and Asn114 each coordinate ATP. His117 (pros-phosphohistidine intermediate) is an active-site residue.

This sequence belongs to the NDK family. In terms of assembly, homotetramer. Mg(2+) serves as cofactor.

It localises to the cytoplasm. The catalysed reaction is a 2'-deoxyribonucleoside 5'-diphosphate + ATP = a 2'-deoxyribonucleoside 5'-triphosphate + ADP. It catalyses the reaction a ribonucleoside 5'-diphosphate + ATP = a ribonucleoside 5'-triphosphate + ADP. Major role in the synthesis of nucleoside triphosphates other than ATP. The ATP gamma phosphate is transferred to the NDP beta phosphate via a ping-pong mechanism, using a phosphorylated active-site intermediate. This is Nucleoside diphosphate kinase from Edwardsiella ictaluri (strain 93-146).